Reading from the N-terminus, the 475-residue chain is Ribulose bisphosphate carboxylase large chain (475 aa).

A propeptide spanning residues 1-2 (MS) is cleaved from the precursor. Residue P3 is modified to N-acetylproline. K14 is modified (N6,N6,N6-trimethyllysine). The substrate site is built by N123 and T173. Residue K175 is the Proton acceptor of the active site. K177 is a substrate binding site. Mg(2+) contacts are provided by K201, D203, and E204. Residue K201 is modified to N6-carboxylysine. H294 acts as the Proton acceptor in catalysis. Residues R295, H327, and S379 each contribute to the substrate site.

Belongs to the RuBisCO large chain family. Type I subfamily. Heterohexadecamer of 8 large chains and 8 small chains. It depends on Mg(2+) as a cofactor.

It localises to the plastid. It is found in the chloroplast. It carries out the reaction 2 (2R)-3-phosphoglycerate + 2 H(+) = D-ribulose 1,5-bisphosphate + CO2 + H2O. The enzyme catalyses D-ribulose 1,5-bisphosphate + O2 = 2-phosphoglycolate + (2R)-3-phosphoglycerate + 2 H(+). Its function is as follows. RuBisCO catalyzes two reactions: the carboxylation of D-ribulose 1,5-bisphosphate, the primary event in carbon dioxide fixation, as well as the oxidative fragmentation of the pentose substrate in the photorespiration process. Both reactions occur simultaneously and in competition at the same active site. The sequence is that of Ribulose bisphosphate carboxylase large chain from Chlorella vulgaris (Green alga).